We begin with the raw amino-acid sequence, 311 residues long: MNKNKPFIVVIVGPTASGKTELSIELAKRINGEIISGDSMQVYKHMNIGTAKVTPEEMDGIPHHLIGILNPDDTFSAYEFKRLAEDLITDITNRGKVPIIAGGTGLYIQSLIYNYELEDETVTPAQLSVVKQKLSALEHLDNQQLHEYLAQFDEASAKNIHPNNRQRVLRAIEYYFKTKKLLSNRKKVQQFTENYDTLLIGIEMSRKTLYSRINKRVDIMLDHGLFREVQQLVEQGYESCQSMQAIGYKELIPVINGQMIYEDAVNDLKQHSRQYAKRQMTWFKNKMSVHWLDKENMSLQMMLDEITTQIK.

ATP is bound at residue 13 to 20 (GPTASGKT). 15-20 (TASGKT) serves as a coordination point for substrate. 2 interaction with substrate tRNA regions span residues 38 to 41 (DSMQ) and 166 to 170 (QRVLR).

Belongs to the IPP transferase family. In terms of assembly, monomer. Requires Mg(2+) as cofactor.

The catalysed reaction is adenosine(37) in tRNA + dimethylallyl diphosphate = N(6)-dimethylallyladenosine(37) in tRNA + diphosphate. Functionally, catalyzes the transfer of a dimethylallyl group onto the adenine at position 37 in tRNAs that read codons beginning with uridine, leading to the formation of N6-(dimethylallyl)adenosine (i(6)A). The chain is tRNA dimethylallyltransferase from Staphylococcus aureus (strain MRSA252).